A 220-amino-acid chain; its full sequence is N-(5'-phosphoribosyl)anthranilate isomerase (220 aa).

Belongs to the TrpF family.

It carries out the reaction N-(5-phospho-beta-D-ribosyl)anthranilate = 1-(2-carboxyphenylamino)-1-deoxy-D-ribulose 5-phosphate. Its pathway is amino-acid biosynthesis; L-tryptophan biosynthesis; L-tryptophan from chorismate: step 3/5. The protein is N-(5'-phosphoribosyl)anthranilate isomerase of Xylella fastidiosa (strain 9a5c).